The sequence spans 734 residues: Photosystem I P700 chlorophyll a apoprotein A2 (734 aa).

A run of 8 helical transmembrane segments spans residues 46–69 (IFASHFGQLAIIFLWTSGNLFHVA), 135–158 (LYTGALFLLFLSTLSLIGGWLHLQ), 175–199 (LNHHLSGLFGVSSLAWTGHLVHVAI), 273–291 (IAHHHLAIAFIFLIAGHMY), 330–353 (IHFQLGLALASLGVITSLVAQHMY), 369–395 (AALYTHHQYIAGFIMTGAFAHGAIFFI), 417–439 (AIISHLSWASLFLGFHTLGLYVH), and 517–535 (FLVHHAIALGLHTTTLILV). Residues Cys559 and Cys568 each contribute to the [4Fe-4S] cluster site. 2 helical membrane-spanning segments follow: residues 575-596 (AFYLAVFWMLNTIGWVTFYWHW) and 643-665 (LSVWAWMFLFGHLVWATGFMFLI). The chlorophyll a site is built by His654, Met662, and Tyr670. Trp671 serves as a coordination point for phylloquinone. A helical membrane pass occupies residues 707-727 (LVGLAHFSVGYIFTYAAFLIA).

The protein belongs to the PsaA/PsaB family. The PsaA/B heterodimer binds the P700 chlorophyll special pair and subsequent electron acceptors. PSI consists of a core antenna complex that captures photons, and an electron transfer chain that converts photonic excitation into a charge separation. The eukaryotic PSI reaction center is composed of at least 11 subunits. P700 is a chlorophyll a/chlorophyll a' dimer, A0 is one or more chlorophyll a, A1 is one or both phylloquinones and FX is a shared 4Fe-4S iron-sulfur center. serves as cofactor.

The protein localises to the plastid. It localises to the chloroplast thylakoid membrane. The catalysed reaction is reduced [plastocyanin] + hnu + oxidized [2Fe-2S]-[ferredoxin] = oxidized [plastocyanin] + reduced [2Fe-2S]-[ferredoxin]. Its function is as follows. PsaA and PsaB bind P700, the primary electron donor of photosystem I (PSI), as well as the electron acceptors A0, A1 and FX. PSI is a plastocyanin-ferredoxin oxidoreductase, converting photonic excitation into a charge separation, which transfers an electron from the donor P700 chlorophyll pair to the spectroscopically characterized acceptors A0, A1, FX, FA and FB in turn. Oxidized P700 is reduced on the lumenal side of the thylakoid membrane by plastocyanin. The sequence is that of Photosystem I P700 chlorophyll a apoprotein A2 from Oryza sativa (Rice).